A 103-amino-acid chain; its full sequence is Small ribosomal subunit protein uS10 (103 aa).

Belongs to the universal ribosomal protein uS10 family. In terms of assembly, part of the 30S ribosomal subunit.

Its function is as follows. Involved in the binding of tRNA to the ribosomes. This chain is Small ribosomal subunit protein uS10, found in Stenotrophomonas maltophilia (strain R551-3).